The chain runs to 150 residues: Dual specificity protein phosphatase 23 (150 aa).

In terms of domain architecture, Tyrosine-protein phosphatase spans 7–150 (NFSWVLPGRL…AVFQFYQRTK (144 aa)). Cys-95 functions as the Phosphocysteine intermediate in the catalytic mechanism.

The protein belongs to the protein-tyrosine phosphatase family. Non-receptor class dual specificity subfamily. Widely expressed. Highly expressed in spleen, prostate, colon, adrenal gland, mammary gland, thyroid and trachea. Expressed at lower level in uterus, small intestine, bladder, bone marrow, brain, spinal cord and stomach.

Its subcellular location is the cytoplasm. It localises to the cytosol. The protein resides in the nucleus. The enzyme catalyses O-phospho-L-tyrosyl-[protein] + H2O = L-tyrosyl-[protein] + phosphate. The catalysed reaction is O-phospho-L-seryl-[protein] + H2O = L-seryl-[protein] + phosphate. It carries out the reaction O-phospho-L-threonyl-[protein] + H2O = L-threonyl-[protein] + phosphate. Protein phosphatase that mediates dephosphorylation of proteins phosphorylated on Tyr and Ser/Thr residues. In vitro, it can dephosphorylate p44-ERK1 (MAPK3) but not p54 SAPK-beta (MAPK10) in vitro. Able to enhance activation of JNK and p38 (MAPK14). The polypeptide is Dual specificity protein phosphatase 23 (DUSP23) (Homo sapiens (Human)).